Here is a 105-residue protein sequence, read N- to C-terminus: Small ribosomal subunit protein uS10 (105 aa).

It belongs to the universal ribosomal protein uS10 family. Part of the 30S ribosomal subunit.

Functionally, involved in the binding of tRNA to the ribosomes. The sequence is that of Small ribosomal subunit protein uS10 from Rickettsia felis (strain ATCC VR-1525 / URRWXCal2) (Rickettsia azadi).